A 481-amino-acid chain; its full sequence is Sialic acid-binding Ig-like lectin 16 (481 aa).

The first 16 residues, Met-1–Leu-16, serve as a signal peptide directing secretion. The Extracellular segment spans residues Asn-17–Gly-434. Residues Asp-19–Glu-122 enclose the Ig-like V-type domain. Cystine bridges form between Cys-37–Cys-174, Cys-42–Cys-102, Cys-165–Cys-216, and Cys-259–Cys-306. Residues Asn-43 and Asn-78 are each glycosylated (N-linked (GlcNAc...) asparagine). An N-acetylneuraminate-binding site is contributed by Arg-120. Ig-like C2-type domains follow at residues Pro-147 to Arg-232, Leu-238 to Ser-322, and Pro-327 to Ser-424. Asn-338 and Asn-347 each carry an N-linked (GlcNAc...) asparagine glycan. A disulfide bridge connects residues Cys-363 and Cys-408. Residues Val-435–Ile-455 traverse the membrane as a helical segment. Residues Leu-456–Asp-481 lie on the Cytoplasmic side of the membrane.

The protein belongs to the immunoglobulin superfamily. SIGLEC (sialic acid binding Ig-like lectin) family. In terms of tissue distribution, expressed in bone marrow, fetal brain, fetal liver, lung and salivary gland. Detected in brain, macrophage, cancerous esophagus and lung at protein level.

The protein resides in the membrane. Putative adhesion molecule that mediates sialic-acid dependent binding to cells. In Homo sapiens (Human), this protein is Sialic acid-binding Ig-like lectin 16 (SIGLEC16).